We begin with the raw amino-acid sequence, 94 residues long: Aspartyl/glutamyl-tRNA(Asn/Gln) amidotransferase subunit C (94 aa).

This sequence belongs to the GatC family. As to quaternary structure, heterotrimer of A, B and C subunits.

The catalysed reaction is L-glutamyl-tRNA(Gln) + L-glutamine + ATP + H2O = L-glutaminyl-tRNA(Gln) + L-glutamate + ADP + phosphate + H(+). The enzyme catalyses L-aspartyl-tRNA(Asn) + L-glutamine + ATP + H2O = L-asparaginyl-tRNA(Asn) + L-glutamate + ADP + phosphate + 2 H(+). In terms of biological role, allows the formation of correctly charged Asn-tRNA(Asn) or Gln-tRNA(Gln) through the transamidation of misacylated Asp-tRNA(Asn) or Glu-tRNA(Gln) in organisms which lack either or both of asparaginyl-tRNA or glutaminyl-tRNA synthetases. The reaction takes place in the presence of glutamine and ATP through an activated phospho-Asp-tRNA(Asn) or phospho-Glu-tRNA(Gln). This is Aspartyl/glutamyl-tRNA(Asn/Gln) amidotransferase subunit C from Caldicellulosiruptor bescii (strain ATCC BAA-1888 / DSM 6725 / KCTC 15123 / Z-1320) (Anaerocellum thermophilum).